A 779-amino-acid polypeptide reads, in one-letter code: Lon protease (779 aa).

The Lon N-terminal domain maps to 10-203 (LPLLPLRGLL…ILLTILNNER (194 aa)). 355-362 (GPPGVGKT) contributes to the ATP binding site. One can recognise a Lon proteolytic domain in the interval 591 to 772 (KDQVGSVTGL…DEVLRHALTK (182 aa)). Active-site residues include Ser678 and Lys721.

It belongs to the peptidase S16 family. As to quaternary structure, homohexamer. Organized in a ring with a central cavity.

The protein resides in the cytoplasm. It catalyses the reaction Hydrolysis of proteins in presence of ATP.. Functionally, ATP-dependent serine protease that mediates the selective degradation of mutant and abnormal proteins as well as certain short-lived regulatory proteins. Required for cellular homeostasis and for survival from DNA damage and developmental changes induced by stress. Degrades polypeptides processively to yield small peptide fragments that are 5 to 10 amino acids long. Binds to DNA in a double-stranded, site-specific manner. The protein is Lon protease of Brevibacillus choshinensis.